A 179-amino-acid polypeptide reads, in one-letter code: Transthyretin-like protein 46 (179 aa).

The signal sequence occupies residues 1–17; that stretch reads MNKLFVLLIALLGLTAA. The tract at residues 144-179 is disordered; it reads RRGGFNADYMDPDNSEKDQSKSSEESEDKEKTVETF. A compositionally biased stretch (basic and acidic residues) spans 157 to 179; that stretch reads NSEKDQSKSSEESEDKEKTVETF.

Belongs to the nematode transthyretin-like family.

Its subcellular location is the secreted. The polypeptide is Transthyretin-like protein 46 (ttr-46) (Caenorhabditis elegans).